Consider the following 492-residue polypeptide: Catalase-2 (492 aa).

Catalysis depends on residues H65 and N138. Y348 serves as a coordination point for heme.

The protein belongs to the catalase family. Homotetramer and heterotetramer. At least six or seven isozymes are produced from a mixture of 3 gene products. Interacts with NCA1. Interacts with LSD1. It depends on heme as a cofactor.

Its subcellular location is the cytoplasm. The protein localises to the cytosol. It localises to the peroxisome matrix. It catalyses the reaction 2 H2O2 = O2 + 2 H2O. Its function is as follows. Catalyzes the degradation of hydrogen peroxide (H(2)O(2)) generated by peroxisomal oxidases to water and oxygen, thereby protecting cells from the toxic effects of hydrogen peroxide. The protein is Catalase-2 (CAT2) of Arabidopsis thaliana (Mouse-ear cress).